The following is a 325-amino-acid chain: uncharacterized protein (325 aa).

The 103-residue stretch at 49–151 folds into the HD domain; it reads RYEHSIGVML…ELCADRTDYT (103 aa).

This is an uncharacterized protein from Bacillus subtilis (strain 168).